The primary structure comprises 307 residues: Coproporphyrin III ferrochelatase (307 aa).

Residues tyrosine 12, arginine 29, 45 to 46 (RY), serine 53, and tyrosine 124 each bind Fe-coproporphyrin III. Positions 181 and 263 each coordinate Fe(2+).

This sequence belongs to the ferrochelatase family.

It is found in the cytoplasm. It catalyses the reaction Fe-coproporphyrin III + 2 H(+) = coproporphyrin III + Fe(2+). It functions in the pathway porphyrin-containing compound metabolism; protoheme biosynthesis. Its function is as follows. Involved in coproporphyrin-dependent heme b biosynthesis. Catalyzes the insertion of ferrous iron into coproporphyrin III to form Fe-coproporphyrin III. It can also insert iron into protoporphyrin IX, but it has a much stronger preference for coproprophyrin III as the substrate. This is Coproporphyrin III ferrochelatase from Staphylococcus aureus (strain NCTC 8325 / PS 47).